The following is a 418-amino-acid chain: MNIFEELKARGLVFQTTDEQALVKALTEGQVSYYTGYDPTADSLHLGHLVAILTSRRLQLAGHKPYALVGGATGLIGDPSFKDAERSLQTKETVLEWSDKIKGQLSAFLDFENGDNKAELVNNYDWFSQISFIDFLRDVGKYFTVNYMMSKDSVKKRIETGISYTEFAYQIMQGYDFYELNDKHNVTLQIGGSDQWGNMTAGTELLRKKADKTGHVMTVPLITDSTGKKFGKSEGNAVWLDADKTSPYEMYQFWLNVMDDDAVRFLKIFTFLSLDEIAEIETQFNAARHERLAQKTLAREVVTLVHGEEAYKQALNITEQLFAGNIKNLSANELKQGLSNVPNYHVQSEDSLNLVDMLVTAGISPSKRQAREDVQNGAIYINGDRVQDLDYQLSNDDKIDDQLTVIRRGKKKYAVLTY.

L-tyrosine is bound at residue Y34. The short motif at 39–48 (PTADSLHLGH) is the 'HIGH' region element. Residues Y169 and Q173 each coordinate L-tyrosine. The short motif at 229–233 (KFGKS) is the 'KMSKS' region element. K232 is an ATP binding site. The S4 RNA-binding domain occupies 352–418 (LNLVDMLVTA…GKKKYAVLTY (67 aa)).

The protein belongs to the class-I aminoacyl-tRNA synthetase family. TyrS type 1 subfamily. As to quaternary structure, homodimer.

Its subcellular location is the cytoplasm. It carries out the reaction tRNA(Tyr) + L-tyrosine + ATP = L-tyrosyl-tRNA(Tyr) + AMP + diphosphate + H(+). Catalyzes the attachment of tyrosine to tRNA(Tyr) in a two-step reaction: tyrosine is first activated by ATP to form Tyr-AMP and then transferred to the acceptor end of tRNA(Tyr). The chain is Tyrosine--tRNA ligase from Streptococcus pyogenes serotype M6 (strain ATCC BAA-946 / MGAS10394).